The following is a 388-amino-acid chain: MQHANTNKSLMTPGNIITGIILVMGLVLTVLRFTKGIGAVSNLDDNNPWGIWIGFDLLCGVALAAGGYVTSASCYLFGMKRYHSAVRPAITTAFLGYFFVVVALNYDLGHPLRLPYPLVYSQGTTSLLFEVGLCVATYLTVLFVEWSPAALEWLGLRKIRNVVVKLTLVLTIFGVVLSTLHQSSLGALFLIAPSKLHPLWYSSFLPVFFFISSMVAGLSMVIFEGSLAHKGMHHMMDETHLKEADGVVFGFGKAASFVLAGYFMIKVIDVTMDNDWHYLATGYGAWWLVEMLGFVALPSFLYALGVREKRIGVIRFASVLGVLGIVMNRFNVCLVAFNWQLPADQRYFPHWMEIGISVFIVTSIITVYRFIASRMPVLYEHPDYKDAH.

10 consecutive transmembrane segments (helical) span residues 10–31, 57–78, 89–106, 130–144, 166–191, 199–222, 254–265, 291–306, 316–328, and 354–368; these read LMTP…LTVL, LLCG…YLFG, AITT…ALNY, EVGL…VLFV, LTLV…LFLI, LWYS…SMVI, AASFVLAGYFMI, MLGF…ALGV, FASV…IVMN, and IGIS…ITVY.

It belongs to the NrfD family.

It localises to the cell membrane. HMWC (high-molecular-weight cytochrome c), ORF2, ORF3, ORF4, ORF5 and ORF6 in the HMC operon form a transmembrane protein complex that allows electron flow from the periplasmic hydrogenase to the cytoplasmic enzymes that catalyze reduction of sulfates. This is Protein DVU_0534 from Nitratidesulfovibrio vulgaris (strain ATCC 29579 / DSM 644 / CCUG 34227 / NCIMB 8303 / VKM B-1760 / Hildenborough) (Desulfovibrio vulgaris).